The sequence spans 297 residues: Bifunctional protein FolD (297 aa).

NADP(+) contacts are provided by residues 167 to 169 (GRS) and I233.

The protein belongs to the tetrahydrofolate dehydrogenase/cyclohydrolase family. As to quaternary structure, homodimer.

It catalyses the reaction (6R)-5,10-methylene-5,6,7,8-tetrahydrofolate + NADP(+) = (6R)-5,10-methenyltetrahydrofolate + NADPH. The enzyme catalyses (6R)-5,10-methenyltetrahydrofolate + H2O = (6R)-10-formyltetrahydrofolate + H(+). It functions in the pathway one-carbon metabolism; tetrahydrofolate interconversion. Catalyzes the oxidation of 5,10-methylenetetrahydrofolate to 5,10-methenyltetrahydrofolate and then the hydrolysis of 5,10-methenyltetrahydrofolate to 10-formyltetrahydrofolate. In Zymomonas mobilis subsp. mobilis (strain ATCC 31821 / ZM4 / CP4), this protein is Bifunctional protein FolD.